The following is a 338-amino-acid chain: Aspartate carbamoyltransferase catalytic subunit (338 aa).

Carbamoyl phosphate-binding residues include Arg-57 and Thr-58. Residue Lys-86 participates in L-aspartate binding. Residues Arg-107, His-135, and Gln-138 each contribute to the carbamoyl phosphate site. 2 residues coordinate L-aspartate: Arg-172 and Arg-234. Residues Leu-274 and Pro-275 each contribute to the carbamoyl phosphate site.

This sequence belongs to the aspartate/ornithine carbamoyltransferase superfamily. ATCase family. As to quaternary structure, heterododecamer (2C3:3R2) of six catalytic PyrB chains organized as two trimers (C3), and six regulatory PyrI chains organized as three dimers (R2).

It catalyses the reaction carbamoyl phosphate + L-aspartate = N-carbamoyl-L-aspartate + phosphate + H(+). It participates in pyrimidine metabolism; UMP biosynthesis via de novo pathway; (S)-dihydroorotate from bicarbonate: step 2/3. Functionally, catalyzes the condensation of carbamoyl phosphate and aspartate to form carbamoyl aspartate and inorganic phosphate, the committed step in the de novo pyrimidine nucleotide biosynthesis pathway. This chain is Aspartate carbamoyltransferase catalytic subunit, found in Cellvibrio japonicus (strain Ueda107) (Pseudomonas fluorescens subsp. cellulosa).